Consider the following 291-residue polypeptide: Malolactic fermentation system transcriptional activator (291 aa).

In terms of domain architecture, HTH lysR-type spans 1–60; it reads MSLNLRDLEYFYQLSKLRSFTNVAKHFRVSQPTISYAIKRLETYYDCDLFYKDSSHQVVD. Residues 20-39 constitute a DNA-binding region (H-T-H motif); it reads FTNVAKHFRVSQPTISYAIK.

This sequence belongs to the LysR transcriptional regulatory family.

The protein localises to the cytoplasm. In terms of biological role, required for malolactic fermentation. It is most probably a transcriptional activator. In Lactococcus lactis subsp. lactis (strain IL1403) (Streptococcus lactis), this protein is Malolactic fermentation system transcriptional activator (mleR).